We begin with the raw amino-acid sequence, 183 residues long: Interleukin-36 beta (183 aa).

The propeptide occupies 1–30 (MMAFPPQSCVHVLPPKSIQMWEPNHNTMHG).

The protein belongs to the IL-1 family. In terms of assembly, interacts with cargo receptor TMED10; the interaction mediates the translocation from the cytoplasm into the ERGIC (endoplasmic reticulum-Golgi intermediate compartment) and thereby secretion. N-terminal truncation leads to a dramatic enhancement of its activity (&gt;1000-fold).

Its subcellular location is the cytoplasm. It localises to the secreted. Its function is as follows. Cytokine that binds to and signals through the IL1RL2/IL-36R receptor which in turn activates NF-kappa-B and MAPK signaling pathways in target cells linked to a pro-inflammatory response. Part of the IL-36 signaling system that is thought to be present in epithelial barriers and to take part in local inflammatory response; similar to the IL-1 system with which it shares the coreceptor IL1RAP. Stimulates production of interleukin-6 and interleukin-8 in synovial fibrobasts, articular chondrocytes and mature adipocytes. Induces expression of a number of antimicrobial peptides including beta-defensin 4 and beta-defensin 103 as well as a number of matrix metalloproteases. Seems to be involved in skin inflammatory response by acting on keratinocytes, dendritic cells and indirectly on T-cells to drive tissue infiltration, cell maturation and cell proliferation. Induces the production of pro-inflammatory cytokines in bone marrow-derived dendritic cells (BMDCs), including IL-12, Il-1 beta, IL-6, TNF-alpha and IL-23, and activates p38 MAPK phosphorylation in BMDCs. Involved in dendritic cell maturation by stimulating the surface expression of CD80, CD86 and MHC class II. Induces the production of IFN-gamma, IL-4 and IL-17 by T-helper 1 (Th1) cells, cultured CD4(+) T-cells and splenocytes. This chain is Interleukin-36 beta, found in Mus musculus (Mouse).